A 403-amino-acid polypeptide reads, in one-letter code: tRNA(Met) cytidine acetate ligase (403 aa).

Residues 7-20 (VVEY…HAYH), Gly-101, Asn-164, and 189-190 (RI) contribute to the ATP site.

This sequence belongs to the TmcAL family.

The protein resides in the cytoplasm. It catalyses the reaction cytidine(34) in elongator tRNA(Met) + acetate + ATP = N(4)-acetylcytidine(34) in elongator tRNA(Met) + AMP + diphosphate. Functionally, catalyzes the formation of N(4)-acetylcytidine (ac(4)C) at the wobble position of elongator tRNA(Met), using acetate and ATP as substrates. First activates an acetate ion to form acetyladenylate (Ac-AMP) and then transfers the acetyl group to tRNA to form ac(4)C34. The polypeptide is tRNA(Met) cytidine acetate ligase (Lysinibacillus sphaericus (strain C3-41)).